Reading from the N-terminus, the 289-residue chain is MASTKEIRSKIKSVQNTRKITKAMEMVAASKMRRAQERMRNARPYAEKIREIVANLSKANPEFRPAYMEAREVKKVGTILVTTDKGLCGGLNTNVLRFITNQVRDLQEKNIEIVYTAIGSKGLQFLNRSKAKLISQTIQIGDTPHMDVLIGAIIAQLEAFERGEIDAVYLAYNRFVNAMKQEPVLEKLLPLEPAALVPEDKAGNSWDYIYEPDAESILNGLLKRYVEAMIYQAVTENMASEQSARMVSMKAASDNAKNVIGELQLEYNKTRQAAITKELSEIVGGAAAV.

The protein belongs to the ATPase gamma chain family. In terms of assembly, F-type ATPases have 2 components, CF(1) - the catalytic core - and CF(0) - the membrane proton channel. CF(1) has five subunits: alpha(3), beta(3), gamma(1), delta(1), epsilon(1). CF(0) has three main subunits: a, b and c.

It localises to the cell inner membrane. Its function is as follows. Produces ATP from ADP in the presence of a proton gradient across the membrane. The gamma chain is believed to be important in regulating ATPase activity and the flow of protons through the CF(0) complex. This Polynucleobacter asymbioticus (strain DSM 18221 / CIP 109841 / QLW-P1DMWA-1) (Polynucleobacter necessarius subsp. asymbioticus) protein is ATP synthase gamma chain.